Reading from the N-terminus, the 288-residue chain is MKRVMLFLITNLAVVLVLSVVLNIVYAVTGMQPGSLSGLLVMAAVFGFGGAFISLMMSKGMALRSVGGMVIESPRNETEHWLLETVSRQAQQAGIGMPTVAIYDSPDINAFATGAKRDDSLVAVSTGLLHNMTRDEAEAVLAHEVSHIANGDMVTMTLMQGVVNTFVIFLSRFIANMVASNNSDEEGEGSNMMVYFAVSIALELVFGFLASFITMWYSRHREFHADAGAARLVGKEKMIAALERLKMSQESKLDGTMMAFGINGKQSLTELLMSHPPLDKRIAALRNF.

Helical transmembrane passes span 4–24 (VMLF…VLNI) and 36–56 (LSGL…ISLM). Residue H143 participates in Zn(2+) binding. E144 is a catalytic residue. H147 contributes to the Zn(2+) binding site. 2 helical membrane-spanning segments follow: residues 151 to 171 (GDMV…IFLS) and 193 to 213 (MVYF…ASFI). E222 lines the Zn(2+) pocket.

Belongs to the peptidase M48B family. It depends on Zn(2+) as a cofactor.

It localises to the cell inner membrane. This Vibrio vulnificus (strain YJ016) protein is Protease HtpX.